Here is a 167-residue protein sequence, read N- to C-terminus: MVLTQHRVPDRPGDPDQDPGRGRRLGIDVGSVRIGVACSDPDAVLATPVETVRRDRSGKHLRRLAALVTELGAVEVVVGLPRTLADRTGTSALDAIDLADQLARRIAPTPVRLADERLTTVAAQRSLRAAGVRAKEQRAVIDQAAAVAILQSWLDQRRAATREAGDG.

The interval 1-24 is disordered; it reads MVLTQHRVPDRPGDPDQDPGRGRR. Residues 7–21 show a composition bias toward basic and acidic residues; the sequence is RVPDRPGDPDQDPGR.

The protein belongs to the YqgF nuclease family.

It localises to the cytoplasm. Could be a nuclease involved in processing of the 5'-end of pre-16S rRNA. This is Putative pre-16S rRNA nuclease from Mycolicibacterium paratuberculosis (strain ATCC BAA-968 / K-10) (Mycobacterium paratuberculosis).